A 495-amino-acid polypeptide reads, in one-letter code: MQVIETLAEGLKREIKVVISAKDMEGRMNERLAEVKDKVRINGFRPGKVPVSHLKKVYGKSIMADLVNEIVRDQPPAILTERGEKSATQPEVAMTEDKDEAEKILAAEADFEFTLSYEVIPAIELKSVKGVKVTREVAEIGEDEVTEQILKIAESARSYEAKKGKAADGDRVTIDYLGKVDGVAFDGGKDEDSQLVIGSNRFIPGFEEQLVGVKAGDEKTITVTFPAEYPAKNLAGKEATFDITVKEVAAPGEVEINDELASKLGLESADRLKEIVRGQIESQYGSVTRQKVKRQILDQLDEMYQFDTPQKLVDAEFASIWRQIQTDLAESGKTFEDEDTTEEKAREEYRKLAERRVRLGLVLSEIGEKAGVEVSEDELQRALYAQLQQFPGQEKEILDFFRNTPGASANLRAPIFEEKVIDHLLTEVDVTDKTVSKEALLADDESEDKPAAKKAAPKKKAAKAEATEAAAEGEEAAVPKKKAAPKKKAAEDSAE.

A PPIase FKBP-type domain is found at 169-254; the sequence is GDRVTIDYLG…VKEVAAPGEV (86 aa). Residues 439 to 495 form a disordered region; that stretch reads ALLADDESEDKPAAKKAAPKKKAAKAEATEAAAEGEEAAVPKKKAAPKKKAAEDSAE.

Belongs to the FKBP-type PPIase family. Tig subfamily.

The protein resides in the cytoplasm. It carries out the reaction [protein]-peptidylproline (omega=180) = [protein]-peptidylproline (omega=0). Involved in protein export. Acts as a chaperone by maintaining the newly synthesized protein in an open conformation. Functions as a peptidyl-prolyl cis-trans isomerase. This is Trigger factor from Rhizobium rhizogenes (strain K84 / ATCC BAA-868) (Agrobacterium radiobacter).